The chain runs to 130 residues: Small ribosomal subunit protein uS11 (130 aa).

It belongs to the universal ribosomal protein uS11 family. As to quaternary structure, part of the 30S ribosomal subunit. Interacts with proteins S7 and S18. Binds to IF-3.

Its function is as follows. Located on the platform of the 30S subunit, it bridges several disparate RNA helices of the 16S rRNA. Forms part of the Shine-Dalgarno cleft in the 70S ribosome. In Acidiphilium cryptum (strain JF-5), this protein is Small ribosomal subunit protein uS11.